Consider the following 258-residue polypeptide: Enterotoxin type G (258 aa).

An N-terminal signal peptide occupies residues 1–25 (MKKLSTVIIILILEIVFHNMNYVNA). An intrachain disulfide couples cysteine 116 to cysteine 133.

This sequence belongs to the staphylococcal/streptococcal toxin family.

The protein resides in the secreted. In terms of biological role, staphylococcal enterotoxins cause the intoxication staphylococcal food poisoning syndrome. The illness is characterized by high fever, hypotension, diarrhea, shock, and in some cases death. This chain is Enterotoxin type G (entG), found in Staphylococcus aureus (strain N315).